The primary structure comprises 268 residues: Taurine import ATP-binding protein TauB (268 aa).

An ABC transporter domain is found at 4–236 (LAIRNISMRF…EGVDADLREV (233 aa)). An ATP-binding site is contributed by 41–48 (GPSGCGKT).

Belongs to the ABC transporter superfamily. Taurine importer (TC 3.A.1.17.1) family. In terms of assembly, the complex is composed of two ATP-binding proteins (TauB), two transmembrane proteins (TauC) and a solute-binding protein (TauA).

It is found in the cell inner membrane. The enzyme catalyses taurine(out) + ATP + H2O = taurine(in) + ADP + phosphate + H(+). Functionally, part of the ABC transporter complex TauABC involved in taurine import. Responsible for energy coupling to the transport system. The polypeptide is Taurine import ATP-binding protein TauB (Jannaschia sp. (strain CCS1)).